Consider the following 140-residue polypeptide: ATP synthase epsilon chain (140 aa).

Belongs to the ATPase epsilon chain family. As to quaternary structure, F-type ATPases have 2 components, CF(1) - the catalytic core - and CF(0) - the membrane proton channel. CF(1) has five subunits: alpha(3), beta(3), gamma(1), delta(1), epsilon(1). CF(0) has three main subunits: a, b and c.

It is found in the cell inner membrane. Functionally, produces ATP from ADP in the presence of a proton gradient across the membrane. The protein is ATP synthase epsilon chain of Xanthomonas oryzae pv. oryzae (strain PXO99A).